The following is a 494-amino-acid chain: Argininosuccinate lyase (494 aa).

It belongs to the lyase 1 family. Argininosuccinate lyase subfamily.

The protein resides in the cytoplasm. It carries out the reaction 2-(N(omega)-L-arginino)succinate = fumarate + L-arginine. The protein operates within amino-acid biosynthesis; L-arginine biosynthesis; L-arginine from L-ornithine and carbamoyl phosphate: step 3/3. The polypeptide is Argininosuccinate lyase (Methanosphaerula palustris (strain ATCC BAA-1556 / DSM 19958 / E1-9c)).